The primary structure comprises 339 residues: Ketol-acid reductoisomerase (NADP(+)) (339 aa).

Residues 1 to 182 (MRVYYDRDAD…GGGRAGIIET (182 aa)) form the KARI N-terminal Rossmann domain. Residues 24–27 (YGSQ), R48, S51, S53, and 83–86 (DELQ) contribute to the NADP(+) site. The active site involves H108. Position 134 (G134) interacts with NADP(+). The KARI C-terminal knotted domain maps to 183–328 (TFKEECETDL…AKLRDMMPWI (146 aa)). 4 residues coordinate Mg(2+): D191, E195, E227, and E231. S252 serves as a coordination point for substrate.

It belongs to the ketol-acid reductoisomerase family. Mg(2+) serves as cofactor.

It carries out the reaction (2R)-2,3-dihydroxy-3-methylbutanoate + NADP(+) = (2S)-2-acetolactate + NADPH + H(+). It catalyses the reaction (2R,3R)-2,3-dihydroxy-3-methylpentanoate + NADP(+) = (S)-2-ethyl-2-hydroxy-3-oxobutanoate + NADPH + H(+). It participates in amino-acid biosynthesis; L-isoleucine biosynthesis; L-isoleucine from 2-oxobutanoate: step 2/4. It functions in the pathway amino-acid biosynthesis; L-valine biosynthesis; L-valine from pyruvate: step 2/4. Involved in the biosynthesis of branched-chain amino acids (BCAA). Catalyzes an alkyl-migration followed by a ketol-acid reduction of (S)-2-acetolactate (S2AL) to yield (R)-2,3-dihydroxy-isovalerate. In the isomerase reaction, S2AL is rearranged via a Mg-dependent methyl migration to produce 3-hydroxy-3-methyl-2-ketobutyrate (HMKB). In the reductase reaction, this 2-ketoacid undergoes a metal-dependent reduction by NADPH to yield (R)-2,3-dihydroxy-isovalerate. The sequence is that of Ketol-acid reductoisomerase (NADP(+)) from Bradyrhizobium diazoefficiens (strain JCM 10833 / BCRC 13528 / IAM 13628 / NBRC 14792 / USDA 110).